Consider the following 228-residue polypeptide: PKHD-type hydroxylase XCV3086 (228 aa).

One can recognise a Fe2OG dioxygenase domain in the interval 78-180; that stretch reads RIYPPLFNRY…RVACFFWTQS (103 aa). Fe cation is bound by residues His-96, Asp-98, and His-161. A 2-oxoglutarate-binding site is contributed by Arg-171.

Fe(2+) is required as a cofactor. The cofactor is L-ascorbate.

This Xanthomonas euvesicatoria pv. vesicatoria (strain 85-10) (Xanthomonas campestris pv. vesicatoria) protein is PKHD-type hydroxylase XCV3086.